The chain runs to 870 residues: DNA mismatch repair protein MutS (870 aa).

Residue Gly622 to Ser629 participates in ATP binding.

It belongs to the DNA mismatch repair MutS family.

Its function is as follows. This protein is involved in the repair of mismatches in DNA. It is possible that it carries out the mismatch recognition step. This protein has a weak ATPase activity. The polypeptide is DNA mismatch repair protein MutS (Methylibium petroleiphilum (strain ATCC BAA-1232 / LMG 22953 / PM1)).